The sequence spans 160 residues: Sec-independent protein translocase protein TatB (160 aa).

A helical transmembrane segment spans residues 1-21 (MFGMGFFEILVVLVVAIIFLG). The disordered stretch occupies residues 118 to 160 (HLNEEVSNEEALNKEVSSDESPKEVQLATDNNTKEHDKEKENV). Basic and acidic residues-rich tracts occupy residues 128–140 (ALNK…ESPK) and 149–160 (NTKEHDKEKENV).

It belongs to the TatB family. In terms of assembly, the Tat system comprises two distinct complexes: a TatABC complex, containing multiple copies of TatA, TatB and TatC subunits, and a separate TatA complex, containing only TatA subunits. Substrates initially bind to the TatABC complex, which probably triggers association of the separate TatA complex to form the active translocon.

Its subcellular location is the cell inner membrane. Functionally, part of the twin-arginine translocation (Tat) system that transports large folded proteins containing a characteristic twin-arginine motif in their signal peptide across membranes. Together with TatC, TatB is part of a receptor directly interacting with Tat signal peptides. TatB may form an oligomeric binding site that transiently accommodates folded Tat precursor proteins before their translocation. In Helicobacter pylori (strain ATCC 700392 / 26695) (Campylobacter pylori), this protein is Sec-independent protein translocase protein TatB.